A 626-amino-acid chain; its full sequence is Chaperone protein DnaK (626 aa).

T175 bears the Phosphothreonine; by autocatalysis mark. The segment covering 586–606 (GAEGAAAGADGAGASAGSASG) has biased composition (low complexity). Residues 586-626 (GAEGAAAGADGAGASAGSASGSDDDTVEAEVVDDDDDKDNK) are disordered. Acidic residues predominate over residues 607 to 626 (SDDDTVEAEVVDDDDDKDNK).

It belongs to the heat shock protein 70 family.

Acts as a chaperone. In Bifidobacterium longum (strain DJO10A), this protein is Chaperone protein DnaK.